The following is a 276-amino-acid chain: NADPH-dependent 7-cyano-7-deazaguanine reductase (276 aa).

Residue 83-85 (IES) coordinates substrate. 85 to 86 (SK) contributes to the NADPH binding site. The Thioimide intermediate role is filled by cysteine 184. The active-site Proton donor is the aspartate 191. 223–224 (HE) serves as a coordination point for substrate. 252 to 253 (RG) is a binding site for NADPH.

This sequence belongs to the GTP cyclohydrolase I family. QueF type 2 subfamily. Homodimer.

It is found in the cytoplasm. The catalysed reaction is 7-aminomethyl-7-carbaguanine + 2 NADP(+) = 7-cyano-7-deazaguanine + 2 NADPH + 3 H(+). It functions in the pathway tRNA modification; tRNA-queuosine biosynthesis. In terms of biological role, catalyzes the NADPH-dependent reduction of 7-cyano-7-deazaguanine (preQ0) to 7-aminomethyl-7-deazaguanine (preQ1). The sequence is that of NADPH-dependent 7-cyano-7-deazaguanine reductase from Pseudomonas fluorescens (strain Pf0-1).